Consider the following 293-residue polypeptide: Large ribosomal subunit protein uL2c (293 aa).

Residues 224–245 are disordered; sequence VMNPVDHPHGGGEGKSPIGRAR.

Belongs to the universal ribosomal protein uL2 family. As to quaternary structure, part of the 50S ribosomal subunit.

It localises to the plastid. The protein resides in the chloroplast. The sequence is that of Large ribosomal subunit protein uL2c (rpl2) from Pyropia yezoensis (Susabi-nori).